The sequence spans 298 residues: Acetylglutamate kinase (298 aa).

Substrate-binding positions include 69–70 (GG), R91, and N196.

Belongs to the acetylglutamate kinase family. ArgB subfamily.

The protein localises to the cytoplasm. The catalysed reaction is N-acetyl-L-glutamate + ATP = N-acetyl-L-glutamyl 5-phosphate + ADP. The protein operates within amino-acid biosynthesis; L-arginine biosynthesis; N(2)-acetyl-L-ornithine from L-glutamate: step 2/4. Functionally, catalyzes the ATP-dependent phosphorylation of N-acetyl-L-glutamate. This is Acetylglutamate kinase from Rhodopseudomonas palustris (strain BisB5).